A 509-amino-acid polypeptide reads, in one-letter code: MDIRAAEISAILKDQIKNFGQEAEVTEVGQVLSVGDGIARVYGLDNVQAGEMVEFENGTRGMALNLETDNVGVVIFGADREIKEGQTVKRTRAIVDAPVGKGLLGRVVDALGNPIDGKGPIQFTERKRVDVKAPGIIPRKSVNEPMATGLKAIDALIPIGRGQRELIIGDRQTGKTAIALDTILNQKPLNAQPDEKIKLYCVYVAVGQKRSTVAQFVKVLEEQGALEYSIVVAATASDPAPMQYLAPFTGCTMGEYFRDNGMHAVIIYDDLSKQAVAYRQMSLLLRRPPGREAYPGDVFYLHSRLLERAAKLNETQGAGSLTALPVIETQANDVSAYIPTNVISITDGQIFLETDLFFQGIRPAVNVGLSVSRVGSSAQTKAMKKVAGKIKGELAQYREMAAFAQFGSDLDAATQRLLNRGSRLTELLKQPQFSPLKMEEQVCVIWAGTNGFLDGLPLNKVRAFEDGLLSLLRGKHADLLNTIRDTRDLSDDSAAKLKAAVEGFAKTFS.

Glycine 169–threonine 176 contacts ATP.

Belongs to the ATPase alpha/beta chains family. In terms of assembly, F-type ATPases have 2 components, CF(1) - the catalytic core - and CF(0) - the membrane proton channel. CF(1) has five subunits: alpha(3), beta(3), gamma(1), delta(1), epsilon(1). CF(0) has four main subunits: a(1), b(1), b'(1) and c(9-12).

Its subcellular location is the cell inner membrane. The catalysed reaction is ATP + H2O + 4 H(+)(in) = ADP + phosphate + 5 H(+)(out). Its function is as follows. Produces ATP from ADP in the presence of a proton gradient across the membrane. The alpha chain is a regulatory subunit. The polypeptide is ATP synthase subunit alpha (Bradyrhizobium sp. (strain ORS 278)).